The primary structure comprises 443 residues: MAIYEDKIDLYDANGKLLDENVPLEAISPLKNPTIGKIVNDVKRSVAVNLAGIENSLKKAALGGKANFIPGRELDLDIVENAEIIAEKIKKMVQVDENDDTNVKMINNGQQLLVQVPTIRIERAADYTVSTLVAGAATIQAIIDTFDVDMFDASTVKTAVLGRYPQTVDFTGANVAAMLSPPVLLEGLGYGLRNILTNHIVATTKKNTLNAAALSSILEQTAMFETGDAVGAFERLHLLGLAYQGLNADNLVYDLVKENKKGTVGTVIASLVERAIEDKVIKVSKEMPSGFRVYEPIDWALWNAYAAAGLLAATIVNIGAARAAQGVASTVLYYNDILEYETGLPGVDFGRAEGTAVGFSFFSHSIYGGGGPGIFHGNHVVTRHSKGFALPCVAAAMSLDAGTQMFSPERTSGLVGQVYSEIDYFREPIKYVAEGAAKIKNKI.

Y367 is a coenzyme M binding site. G369 provides a ligand contact to coenzyme B.

The protein belongs to the methyl-coenzyme M reductase beta subunit family. As to quaternary structure, MCR is a hexamer of two alpha, two beta, and two gamma chains, forming a dimer of heterotrimers. Coenzyme F430 serves as cofactor.

The catalysed reaction is coenzyme B + methyl-coenzyme M = methane + coenzyme M-coenzyme B heterodisulfide. It participates in one-carbon metabolism; methyl-coenzyme M reduction; methane from methyl-coenzyme M: step 1/1. Component of the methyl-coenzyme M reductase (MCR) I that catalyzes the reductive cleavage of methyl-coenzyme M (CoM-S-CH3 or 2-(methylthio)ethanesulfonate) using coenzyme B (CoB or 7-mercaptoheptanoylthreonine phosphate) as reductant which results in the production of methane and the mixed heterodisulfide of CoB and CoM (CoM-S-S-CoB). This is the final step in methanogenesis. In Methanothermus fervidus (strain ATCC 43054 / DSM 2088 / JCM 10308 / V24 S), this protein is Methyl-coenzyme M reductase II subunit beta (mrtB).